The chain runs to 350 residues: Homoserine O-succinyltransferase (350 aa).

Cys146 functions as the Acyl-thioester intermediate in the catalytic mechanism. Residues Lys167 and Ser196 each contribute to the substrate site. The active-site Proton acceptor is His239. Residue Glu241 is part of the active site. Position 253 (Arg253) interacts with substrate.

It belongs to the MetA family.

It localises to the cytoplasm. The enzyme catalyses L-homoserine + succinyl-CoA = O-succinyl-L-homoserine + CoA. The protein operates within amino-acid biosynthesis; L-methionine biosynthesis via de novo pathway; O-succinyl-L-homoserine from L-homoserine: step 1/1. Functionally, transfers a succinyl group from succinyl-CoA to L-homoserine, forming succinyl-L-homoserine. This chain is Homoserine O-succinyltransferase, found in Cardiobacterium hominis (strain ATCC 15826 / DSM 8339 / NCTC 10426 / 6573).